The sequence spans 66 residues: Large ribosomal subunit protein bL35 (66 aa).

Basic residues-rich tracts occupy residues 1–26 (MPKMKTHKGAAKRFKKTGSGKLKRSH) and 38–48 (QKQKRKLRKSA). The segment at 1 to 48 (MPKMKTHKGAAKRFKKTGSGKLKRSHAFTSHLFANKSQKQKRKLRKSA) is disordered.

This sequence belongs to the bacterial ribosomal protein bL35 family.

The protein is Large ribosomal subunit protein bL35 of Halalkalibacterium halodurans (strain ATCC BAA-125 / DSM 18197 / FERM 7344 / JCM 9153 / C-125) (Bacillus halodurans).